Consider the following 347-residue polypeptide: Merozoite surface protein 2 (347 aa).

Positions 1-20 (MKVIKTLSIINFFIFVTFNI) are cleaved as a signal peptide. Asn22 and Asn36 each carry an N-linked (GlcNAc...) asparagine glycan. The interval 44–273 (AESKPPTGDG…EQTESPELQS (230 aa)) is polymorphic region. 22 repeat units span residues 53-60 (GAVASAGN), 61-68 (GAVASAGN), 69-76 (GAVASAGN), 77-84 (GAVASAGN), 85-88 (GAGN), 89-92 (GAGN), 93-96 (GAGN), 97-100 (GAGN), 101-104 (GAGN), 105-108 (GAGN), 109-112 (GAGN), 113-116 (GAGN), 117-120 (GAGN), 121-124 (GAGN), 125-128 (GAGN), 129-132 (GAGN), 133-136 (GAGN), 137-140 (GAGN), 141-144 (GAGN), 145-152 (GAVASAGN), 153-156 (GAGN), and 157-164 (GAVASAGN). The tract at residues 53-164 (GAVASAGNGA…GNGAVASAGN (112 aa)) is 6 X 8 AA repeats of G-A-V-A-S-A-G-N. A 16 X 4 AA repeats of G-A-G-N region spans residues 85 to 156 (GAGNGAGNGA…VASAGNGAGN (72 aa)). Residues 165 to 206 (GAVAERSSSTPATTTTTTTTNDAEASTSTSSENSNHNNAETN) are compositionally biased toward low complexity. Residues 165 to 308 (GAVAERSSST…DSQKECTDGN (144 aa)) are disordered. 2 stretches are compositionally biased toward polar residues: residues 213–240 (VQPN…NVPR) and 247–275 (KSPT…QSAP). Asn224 is a glycosylation site (N-linked (GlcNAc...) asparagine). Residue Asn296 is glycosylated (N-linked (GlcNAc...) asparagine). An intrachain disulfide couples Cys304 to Cys312. Residues Asn320 and Asn321 are each glycosylated (N-linked (GlcNAc...) asparagine). Asn321 is lipidated: GPI-anchor amidated asparagine. Residues 322–347 (SSNIASINKFVVLISATLVLSFAIFI) constitute a propeptide, removed in mature form.

The protein localises to the cell membrane. In terms of biological role, may play a role in the merozoite attachment to the erythrocyte. This Plasmodium falciparum (isolate Nig32 / Nigeria) protein is Merozoite surface protein 2.